A 173-amino-acid chain; its full sequence is 3-isopropylmalate dehydratase small subunit (173 aa).

Belongs to the LeuD family. LeuD type 2 subfamily. Heterodimer of LeuC and LeuD.

It carries out the reaction (2R,3S)-3-isopropylmalate = (2S)-2-isopropylmalate. Its pathway is amino-acid biosynthesis; L-leucine biosynthesis; L-leucine from 3-methyl-2-oxobutanoate: step 2/4. Catalyzes the isomerization between 2-isopropylmalate and 3-isopropylmalate, via the formation of 2-isopropylmaleate. This chain is 3-isopropylmalate dehydratase small subunit, found in Caldicellulosiruptor saccharolyticus (strain ATCC 43494 / DSM 8903 / Tp8T 6331).